Consider the following 208-residue polypeptide: High frequency lysogenization protein HflD homolog (208 aa).

The stretch at 91-125 (LMVLERKLNANKQAMNQLGERLGQLERQLAHFDLE) forms a coiled coil.

It belongs to the HflD family.

The protein resides in the cytoplasm. The protein localises to the cell inner membrane. This is High frequency lysogenization protein HflD homolog from Serratia proteamaculans (strain 568).